We begin with the raw amino-acid sequence, 2925 residues long: Otogelin (2925 aa).

The signal sequence occupies residues 1–25 (MGVLASALCWLLCVWLPWGEQAAES). The tract at residues 39-69 (GRSGARGMRNVKGMRNGPAQTRVSSSSSHQE) is disordered. Residues 56–69 (PAQTRVSSSSSHQE) are compositionally biased toward polar residues. Residues 102 to 139 (HRAKCAPSYLFSCFNGGECVHPAFCDCRRFNATGPRCQ) form the EGF-like domain. Intrachain disulfides connect Cys106-Cys120, Cys114-Cys126, Cys128-Cys138, Cys152-Cys285, and Cys199-Cys206. A VWFD 1 domain is found at 150 to 322 (SICRAWGQHH…SWQEQAPNQP (173 aa)). The interval 316-335 (EQAPNQPPGPTTSSLPRPPC) is disordered. Residues 326–335 (TTSSLPRPPC) show a composition bias toward polar residues. Residues 512-688 (AECSVTGDIH…NSWKTLSACS (177 aa)) form the VWFD 2 domain. 3 disulfide bridges follow: Cys514/Cys652, Cys536/Cys687, and Cys558/Cys566. One can recognise a TIL domain in the interval 780 to 844 (CEASKEYSPC…ADLCVPRNQC (65 aa)). Asn914 is a glycosylation site (N-linked (GlcNAc...) asparagine). The region spanning 984–1152 (STCTAYGDRH…SWAAVECPDT (169 aa)) is the VWFD 3 domain. 2 disulfides stabilise this stretch: Cys986–Cys1115 and Cys1030–Cys1037. The segment at 1476-1540 (LGNETLPPSQ…PVVSPGPTQT (65 aa)) is disordered. Asn1478 carries N-linked (GlcNAc...) asparagine glycosylation. A compositionally biased stretch (low complexity) spans 1502–1528 (PRTPTHRPALTPAAPLTTALNPPVTAT). An N-linked (GlcNAc...) asparagine glycan is attached at Asn1612. 3 disordered regions span residues 1636–1679 (GHGS…HKAV), 1693–1715 (VPQP…AGTA), and 1737–1788 (KGEA…ASLS). Residues 1650–1659 (SLTASPSSRP) show a composition bias toward polar residues. The span at 1694 to 1708 (PQPTQAQSASSPSTP) shows a compositional bias: low complexity. Residues 1751–1764 (SPQPHPLPSAPPRP) show a composition bias toward pro residues. The region spanning 2110 to 2289 (CRCSIFPDLS…SWQVPSSLTS (180 aa)) is the VWFD 4 domain. 5 disulfides stabilise this stretch: Cys2112–Cys2249, Cys2840–Cys2889, Cys2854–Cys2903, Cys2865–Cys2920, and Cys2869–Cys2922. The CTCK domain maps to 2840–2925 (CKKVTIRMTI…EPTDCACQWS (86 aa)).

Belongs to the otogelin family. Post-translationally, N-glycosylated. Not O-glycosylated.

Its subcellular location is the apical cell membrane. It is found in the secreted. The protein resides in the extracellular space. Its function is as follows. Glycoprotein specific to acellular membranes of the inner ear. May be required for the anchoring of the otoconial membranes and cupulae to the underlying neuroepithelia in the vestibule. May be involved in the organization and/or stabilization of the fibrillar network that compose the tectorial membrane in the cochlea. May play a role in mechanotransduction processes. The protein is Otogelin (OTOG) of Homo sapiens (Human).